Reading from the N-terminus, the 154-residue chain is MAQSINITELNLPQLEMLKNQLDQEVEFLSTSIAQLKVVQTKYVEAKDCLNVLNKSNEGKELLVPLTSSMYVPGKLHDVEHVLIDVGTGYYVEKTAEDAKDFFKRKIDFLTKQMEKIQPALQEKHAMKQAVMEMMSQKIQQLTALGAAQATVKA.

Position 2 is an N-acetylalanine (alanine 2). Lysine 42 is subject to N6-acetyllysine. Position 56 is a phosphoserine (serine 56).

Belongs to the prefoldin subunit alpha family. In terms of assembly, heterohexamer of two PFD-alpha type and four PFD-beta type subunits.

It is found in the nucleus. Binds specifically to cytosolic chaperonin (c-CPN) and transfers target proteins to it. Binds to nascent polypeptide chain and promotes folding in an environment in which there are many competing pathways for nonnative proteins. Represses the transcriptional activity of MYC. The polypeptide is Prefoldin subunit 5 (Pfdn5) (Mus musculus (Mouse)).